Consider the following 494-residue polypeptide: Truncated non-functional calcium-binding mitochondrial carrier SAL1-1 (494 aa).

The region spanning 11-46 is the EF-hand 1 domain; it reads QRDIRYACLFKELDVKGNGQVTLDNLISAFEKNDHP. 7 residues coordinate Ca(2+): lysine 65, aspartate 70, aspartate 93, aspartate 95, aspartate 97, lysine 99, and glutamate 104. EF-hand domains are found at residues 80-115, 120-155, and 156-191; these read NAESQIWNGFQRIDLDHDGKIGINEINRYLSDLDNQ, NELNHELSNEKVNKFSRFFEWAFPKRKANIALRGQA, and SHKKNTDNDRSKKTTDSDLYVTYDQWRDFLLLVPRK. Residues threonine 161 and serine 166 each coordinate Ca(2+). 2 Solcar repeats span residues 225–332 and 345–434; these read IRGF…TKKI and LSKF…LKKM. The next 5 helical transmembrane spans lie at 231 to 248, 307 to 326, 355 to 368, 409 to 428, and 458 to 475; these read FIAGGISGVISRTCTAPF, GNGLNVIKVFPESSIKFGSF, GLAGMAAQFSVYPI, RCHSRYSGHISLCCIRFGDF, and TSNGCIQWNCRSFCCLSN. Residues 452-494 form a Solcar 3; truncated repeat; sequence SKQPGCTSNGCIQWNCRSFCCLSNQSFKNKTTSPRNICTSLCV.

Belongs to the mitochondrial carrier (TC 2.A.29) family.

It is found in the mitochondrion inner membrane. Functionally, calcium-dependent mitochondrial solute carrier. The polypeptide is Truncated non-functional calcium-binding mitochondrial carrier SAL1-1 (SAL1) (Saccharomyces cerevisiae (strain ATCC 204508 / S288c) (Baker's yeast)).